Reading from the N-terminus, the 369-residue chain is Flagellar P-ring protein (369 aa).

A signal peptide spans 1 to 22 (MIKLKQLIAATLLLSTAFGVHA).

The protein belongs to the FlgI family. In terms of assembly, the basal body constitutes a major portion of the flagellar organelle and consists of four rings (L,P,S, and M) mounted on a central rod.

The protein resides in the periplasm. It is found in the bacterial flagellum basal body. Its function is as follows. Assembles around the rod to form the L-ring and probably protects the motor/basal body from shearing forces during rotation. This Pseudomonas savastanoi pv. phaseolicola (strain 1448A / Race 6) (Pseudomonas syringae pv. phaseolicola (strain 1448A / Race 6)) protein is Flagellar P-ring protein.